The primary structure comprises 652 residues: MTEVSKAAAFDRTQFEELMKKRFFFSPSFQIYGGISGLYDYGPPGSALQSNLVDIWRKHFVIEESMLEVDCSMLTPHEVLKTSGHVDKFADWMCKDPATGEIFRADHLVEEVLEARLKGDKEARGQNSNDQPEESDDKKKRKKKVKEIRATRLDDKTVEEYEFILAQIDNYDGDQLGELMKKYDIRNPATNGELETPRQFNLMFETQIGPSGGLKGYLRPETAQGQFLNFSRLLEFNNGKVPFASAMVGKAFRNEISPRSGLLRVREFLMAEVEHFVDPKNKEHDRFDEVSHMPLRLLPRGVQLEGKTDILEMPIGDAVKKGIVDNTTLGYFMARISLFLEKIGIDMNRVRFRQHMSNEMAHYACDCWDAEIQCSYGWIECVGCADRSAYDLSVHSKATKTPLVVQEALPEPVVVEQFEVEVNRKKFGPRFKRDAKAVEEAMISWPESEKVEKSAQLVAEGKIIVNVNGVEHTVESDLVTIEKRKHTEHIRTYTPNVIEPSFGLGRILYVLMEHAYWTRPEDVNRGVLSFPASIAPIKALIVPLSRNAEFAPFVKKLSAKLRNLGISNKIDDSNANIGRRYARNDELGTPFGLTVDFETLQNETITLRERDSTKQVRGSQDEVIAALVSMVEGKSSFEDALAKFGEFKSTQE.

Positions 119–145 (GDKEARGQNSNDQPEESDDKKKRKKKV) are disordered. E221 serves as a coordination point for glycine. ATP-binding positions include 253-255 (RNE) and 264-265 (RV). E272 serves as a coordination point for glycine. 380–381 (EC) provides a ligand contact to ATP. 499-501 (EPS) contacts glycine. Residue R506 coordinates ATP.

Belongs to the class-II aminoacyl-tRNA synthetase family. In terms of assembly, homodimer.

The protein localises to the cytoplasm. The enzyme catalyses tRNA(Gly) + glycine + ATP = glycyl-tRNA(Gly) + AMP + diphosphate. It catalyses the reaction 2 ATP + H(+) = P(1),P(4)-bis(5'-adenosyl) tetraphosphate + diphosphate. In terms of biological role, catalyzes the ATP-dependent ligation of glycine to the 3'-end of its cognate tRNA, via the formation of an aminoacyl-adenylate intermediate (Gly-AMP). Also produces diadenosine tetraphosphate (Ap4A), a universal pleiotropic signaling molecule needed for cell regulation pathways, by direct condensation of 2 ATPs. Thereby, may play a special role in Ap4A homeostasis. The sequence is that of Putative glycine--tRNA ligase (grs1) from Schizosaccharomyces pombe (strain 972 / ATCC 24843) (Fission yeast).